Here is a 307-residue protein sequence, read N- to C-terminus: MEFVFLGTGAGVPSKGRNVSAIALQLLEERGQTWLFDCGEATQHQILHTSVRPRRIEKIFITHLHGDHIFGLPGLLGSRSFQGGTTKLTVYGPKGIKQFIEVALLVSTTHVKYPLEIVEITEEGIVFEDNEFCVETKRLSHGIECFGYRIVEKDIQGALLVDKLLGMGVKPGPVFKRLKDGEVVELENGTVLDGKDFIGPPQKGRVITILGDTRYCEASRELAQDADVLVHEATFAAEDEQQAYDYFHSTSKQAASIALQANAKRLILTHISSRYQGDTYKELLKEARELFSNTEIATDLKSFPVER.

Residues His-63, His-65, Asp-67, His-68, His-141, Asp-212, and His-270 each contribute to the Zn(2+) site. The active-site Proton acceptor is Asp-67.

This sequence belongs to the RNase Z family. In terms of assembly, homodimer. It depends on Zn(2+) as a cofactor.

It carries out the reaction Endonucleolytic cleavage of RNA, removing extra 3' nucleotides from tRNA precursor, generating 3' termini of tRNAs. A 3'-hydroxy group is left at the tRNA terminus and a 5'-phosphoryl group is left at the trailer molecule.. Its function is as follows. Zinc phosphodiesterase, which displays some tRNA 3'-processing endonuclease activity. Probably involved in tRNA maturation, by removing a 3'-trailer from precursor tRNA. This chain is Ribonuclease Z, found in Bacillus mycoides (strain KBAB4) (Bacillus weihenstephanensis).